The sequence spans 466 residues: Cysteine--tRNA ligase (466 aa).

Cys-29 is a binding site for Zn(2+). The 'HIGH' region motif lies at 31-41 (ATVQAAPHIGH). Residues Cys-208, His-233, and Glu-237 each contribute to the Zn(2+) site. A 'KMSKS' region motif is present at residues 264-268 (KMSKS). Lys-267 lines the ATP pocket.

The protein belongs to the class-I aminoacyl-tRNA synthetase family. In terms of assembly, monomer. It depends on Zn(2+) as a cofactor.

It localises to the cytoplasm. The catalysed reaction is tRNA(Cys) + L-cysteine + ATP = L-cysteinyl-tRNA(Cys) + AMP + diphosphate. This Streptomyces griseus subsp. griseus (strain JCM 4626 / CBS 651.72 / NBRC 13350 / KCC S-0626 / ISP 5235) protein is Cysteine--tRNA ligase.